The following is a 101-amino-acid chain: Small ribosomal subunit protein uS14 (101 aa).

The tract at residues 44 to 74 is disordered; the sequence is ASRKLSRLPRDSSPVRLRNRDQVDGRPRGYV. Residues 61–70 are compositionally biased toward basic and acidic residues; that stretch reads RNRDQVDGRP.

The protein belongs to the universal ribosomal protein uS14 family. As to quaternary structure, part of the 30S ribosomal subunit. Contacts proteins S3 and S10.

Binds 16S rRNA, required for the assembly of 30S particles and may also be responsible for determining the conformation of the 16S rRNA at the A site. This Cutibacterium acnes (strain DSM 16379 / KPA171202) (Propionibacterium acnes) protein is Small ribosomal subunit protein uS14.